Consider the following 218-residue polypeptide: Uracil-DNA glycosylase (218 aa).

Asp-59 acts as the Proton acceptor in catalysis.

It belongs to the uracil-DNA glycosylase (UDG) superfamily. UNG family.

The protein resides in the cytoplasm. The catalysed reaction is Hydrolyzes single-stranded DNA or mismatched double-stranded DNA and polynucleotides, releasing free uracil.. Its function is as follows. Excises uracil residues from the DNA which can arise as a result of misincorporation of dUMP residues by DNA polymerase or due to deamination of cytosine. The protein is Uracil-DNA glycosylase of Staphylococcus aureus (strain JH1).